A 498-amino-acid polypeptide reads, in one-letter code: Glycerol kinase (498 aa).

Threonine 12 serves as a coordination point for ADP. ATP-binding residues include threonine 12, threonine 13, and serine 14. Threonine 12 serves as a coordination point for sn-glycerol 3-phosphate. Arginine 16 contacts ADP. Sn-glycerol 3-phosphate is bound by residues arginine 82, glutamate 83, tyrosine 134, and aspartate 243. 5 residues coordinate glycerol: arginine 82, glutamate 83, tyrosine 134, aspartate 243, and glutamine 244. ADP-binding residues include threonine 265 and glycine 308. ATP is bound by residues threonine 265, glycine 308, glutamine 312, and glycine 409. Glycine 409 and asparagine 413 together coordinate ADP.

The protein belongs to the FGGY kinase family. Homotetramer and homodimer (in equilibrium).

The enzyme catalyses glycerol + ATP = sn-glycerol 3-phosphate + ADP + H(+). Its pathway is polyol metabolism; glycerol degradation via glycerol kinase pathway; sn-glycerol 3-phosphate from glycerol: step 1/1. Its activity is regulated as follows. Activated by phosphorylation and inhibited by fructose 1,6-bisphosphate (FBP). In terms of biological role, key enzyme in the regulation of glycerol uptake and metabolism. Catalyzes the phosphorylation of glycerol to yield sn-glycerol 3-phosphate. The sequence is that of Glycerol kinase from Clostridium botulinum (strain Langeland / NCTC 10281 / Type F).